The following is a 182-amino-acid chain: Probable chorismate pyruvate-lyase (182 aa).

3 residues coordinate substrate: Arg81, Leu119, and Glu171.

It belongs to the UbiC family.

It localises to the cytoplasm. The enzyme catalyses chorismate = 4-hydroxybenzoate + pyruvate. It participates in cofactor biosynthesis; ubiquinone biosynthesis. Functionally, removes the pyruvyl group from chorismate, with concomitant aromatization of the ring, to provide 4-hydroxybenzoate (4HB) for the ubiquinone pathway. This Pseudomonas putida (Arthrobacter siderocapsulatus) protein is Probable chorismate pyruvate-lyase.